Reading from the N-terminus, the 479-residue chain is Lysosomal protective protein (479 aa).

The first 27 residues, 1 to 27, serve as a signal peptide directing secretion; that stretch reads MFRAALWPPVLLLLQLLLLACAPGGEG. 4 disulfides stabilise this stretch: cysteine 87–cysteine 361, cysteine 239–cysteine 255, cysteine 240–cysteine 245, and cysteine 280–cysteine 330. Asparagine 144 is a glycosylation site (N-linked (GlcNAc...) asparagine). Serine 177 is a catalytic residue. Asparagine 332 is a glycosylation site (N-linked (GlcNAc...) asparagine). Residues aspartate 399 and histidine 456 contribute to the active site.

Belongs to the peptidase S10 family. In terms of assembly, heterodimer of a 32 kDa chain and a 20 kDa chain; disulfide-linked.

The protein resides in the lysosome. It catalyses the reaction Release of a C-terminal amino acid with broad specificity.. In terms of biological role, protective protein appears to be essential for both the activity of beta-galactosidase and neuraminidase, it associates with these enzymes and exerts a protective function necessary for their stability and activity. This protein is also a carboxypeptidase and can deamidate tachykinins. The chain is Lysosomal protective protein (CTSA) from Bos taurus (Bovine).